A 136-amino-acid chain; its full sequence is Alpha-2-purothionin (136 aa).

The first 27 residues, 1-27, serve as a signal peptide directing secretion; that stretch reads MGSKGLKGVMVCLLILGLVLEQVQVEG. 4 disulfides stabilise this stretch: Cys30-Cys66, Cys31-Cys58, Cys39-Cys56, and Cys43-Cys52. A propeptide spans 73 to 136 (acidic domain); the sequence is LALESNSDEP…GDAGLTSLDA (64 aa).

It belongs to the plant thionin (TC 1.C.44) family. 4 C-C subfamily.

The protein resides in the secreted. In terms of biological role, thionins are small plant proteins which are toxic to animal cells. They seem to exert their toxic effect at the level of the cell membrane. Their precise function is not known. This Triticum aestivum (Wheat) protein is Alpha-2-purothionin (THI1.2).